The following is a 462-amino-acid chain: Chitinase-like mite allergen Der p 18.0101 (462 aa).

Residues 1–25 (MTRLSFTVLIFLAAYFGSNIRPNVA) form the signal peptide. One can recognise a GH18 domain in the interval 29–378 (PKTVCYYESW…HAINSNYFRG (350 aa)). A disulfide bond links C33 and C58. Residues N338 and N441 are each glycosylated (N-linked (GlcNAc...) asparagine). The 59-residue stretch at 404 to 462 (VFHCHQEGFFRDKTYCAKYYECKKGDFGLEQTVHHCPNHSQAFDEVSRTCVDHAKIPGC) folds into the Chitin-binding type-2 domain. A disulfide bond links C439 and C453.

Belongs to the glycosyl hydrolase 18 family. Chitinase class II subfamily. Expressed in the peritrophic matrix of the midgut, and only very weakly in fecal pellets.

Its subcellular location is the secreted. Probably a non-catalytic chitinase-like protein, which binds to insoluble chitin and enhances the activity of the catalytic chitinases. Has weak chitin-binding activity. This Dermatophagoides pteronyssinus (European house dust mite) protein is Chitinase-like mite allergen Der p 18.0101.